Here is a 65-residue protein sequence, read N- to C-terminus: Translational regulator CsrA (65 aa).

It belongs to the CsrA/RsmA family. As to quaternary structure, homodimer; the beta-strands of each monomer intercalate to form a hydrophobic core, while the alpha-helices form wings that extend away from the core.

The protein localises to the cytoplasm. Functionally, a translational regulator that binds mRNA to regulate translation initiation and/or mRNA stability. Usually binds in the 5'-UTR at or near the Shine-Dalgarno sequence preventing ribosome-binding, thus repressing translation. Its main target seems to be the major flagellin gene, while its function is anatagonized by FliW. This Bordetella petrii (strain ATCC BAA-461 / DSM 12804 / CCUG 43448) protein is Translational regulator CsrA.